A 222-amino-acid polypeptide reads, in one-letter code: Recombination protein RecR (222 aa).

The C4-type zinc-finger motif lies at 57–72; the sequence is CPVCFNITDAERCDVC. A Toprim domain is found at 80-173; it reads SVICVVEEPG…VVSRIAYGLP (94 aa). Positions 189–222 are disordered; sequence ALSGRRRVSEPASPPPPRRNDEEQDGAPARPPSH.

Belongs to the RecR family.

May play a role in DNA repair. It seems to be involved in an RecBC-independent recombinational process of DNA repair. It may act with RecF and RecO. This chain is Recombination protein RecR, found in Deinococcus geothermalis (strain DSM 11300 / CIP 105573 / AG-3a).